The primary structure comprises 269 residues: 4-hydroxy-tetrahydrodipicolinate reductase (269 aa).

Residues 11 to 16 and glutamate 37 contribute to the NAD(+) site; that span reads GASGRM. Position 38 (arginine 38) interacts with NADP(+). Residues 101–103 and 125–128 each bind NAD(+); these read GTT and AGNM. Histidine 158 (proton donor/acceptor) is an active-site residue. Histidine 159 provides a ligand contact to (S)-2,3,4,5-tetrahydrodipicolinate. The active-site Proton donor is lysine 162. 168-169 serves as a coordination point for (S)-2,3,4,5-tetrahydrodipicolinate; it reads GT.

Belongs to the DapB family.

It is found in the cytoplasm. It catalyses the reaction (S)-2,3,4,5-tetrahydrodipicolinate + NAD(+) + H2O = (2S,4S)-4-hydroxy-2,3,4,5-tetrahydrodipicolinate + NADH + H(+). It carries out the reaction (S)-2,3,4,5-tetrahydrodipicolinate + NADP(+) + H2O = (2S,4S)-4-hydroxy-2,3,4,5-tetrahydrodipicolinate + NADPH + H(+). Its pathway is amino-acid biosynthesis; L-lysine biosynthesis via DAP pathway; (S)-tetrahydrodipicolinate from L-aspartate: step 4/4. Functionally, catalyzes the conversion of 4-hydroxy-tetrahydrodipicolinate (HTPA) to tetrahydrodipicolinate. The sequence is that of 4-hydroxy-tetrahydrodipicolinate reductase from Cereibacter sphaeroides (strain KD131 / KCTC 12085) (Rhodobacter sphaeroides).